A 342-amino-acid polypeptide reads, in one-letter code: Ribosomal RNA small subunit methyltransferase C (342 aa).

It belongs to the methyltransferase superfamily. RsmC family. In terms of assembly, monomer.

It is found in the cytoplasm. The enzyme catalyses guanosine(1207) in 16S rRNA + S-adenosyl-L-methionine = N(2)-methylguanosine(1207) in 16S rRNA + S-adenosyl-L-homocysteine + H(+). Its function is as follows. Specifically methylates the guanine in position 1207 of 16S rRNA in the 30S particle. The chain is Ribosomal RNA small subunit methyltransferase C from Salmonella paratyphi B (strain ATCC BAA-1250 / SPB7).